The primary structure comprises 226 residues: Ribonuclease 3 (226 aa).

Residues 6-128 (INRLQRKLGY…LIGGVFLDSD (123 aa)) enclose the RNase III domain. E41 is a Mg(2+) binding site. D45 is an active-site residue. Mg(2+) contacts are provided by D114 and E117. The active site involves E117. The 71-residue stretch at 155 to 225 (DPKTRLQEYL…AEQALKQLEL (71 aa)) folds into the DRBM domain.

It belongs to the ribonuclease III family. In terms of assembly, homodimer. It depends on Mg(2+) as a cofactor.

Its subcellular location is the cytoplasm. The catalysed reaction is Endonucleolytic cleavage to 5'-phosphomonoester.. Its function is as follows. Digests double-stranded RNA. Involved in the processing of primary rRNA transcript to yield the immediate precursors to the large and small rRNAs (23S and 16S). Processes some mRNAs, and tRNAs when they are encoded in the rRNA operon. Processes pre-crRNA and tracrRNA of type II CRISPR loci if present in the organism. This Yersinia pseudotuberculosis serotype O:1b (strain IP 31758) protein is Ribonuclease 3.